The primary structure comprises 466 residues: Voltage-gated potassium channel regulatory subunit KCNG2 (466 aa).

Residues 1–174 (MEPWPCSPGG…DVVDNPHSGL (174 aa)) lie on the Cytoplasmic side of the membrane. The disordered stretch occupies residues 131–155 (AEARAGPTERGAQGSPARALGPRGR). The helical transmembrane segment at 175-196 (AGKLFACVSVSFVAVTAVGLCL) threads the bilayer. The Extracellular portion of the chain corresponds to 197–217 (STMPDIRAEEERGECSPKCRS). A helical transmembrane segment spans residues 218–239 (LFVLETVCVAWFSFEFLLRSLQ). Topologically, residues 240–250 (AESKCAFLRAP) are cytoplasmic. A helical membrane pass occupies residues 251 to 271 (LNIIDILALLPFYVSLLLGLA). Topologically, residues 272–283 (AGPGGTKLLERA) are extracellular. A helical; Voltage-sensor transmembrane segment spans residues 284-304 (GLVLRLLRALRVLYVMRLARH). At 305-319 (SLGLRSLGLTMRRCA) the chain is on the cytoplasmic side. Residues 320-341 (REFGLLLLFLCVAMALFAPLVH) traverse the membrane as a helical segment. Topologically, residues 342-356 (LAERELGARRDFSSV) are extracellular. Positions 357–368 (PASYWWAVISMT) form an intramembrane region, helical. Residues 369–374 (TVGYGD) carry the Selectivity filter motif. Residues 369–376 (TVGYGDMV) lie within the membrane without spanning it. Topologically, residues 377–383 (PRSLPGQ) are extracellular. A helical membrane pass occupies residues 384-412 (VVALSSILSGILLMAFPVTSIFHTFSRSY). At 413 to 466 (SELKEQQQRAASPEPALQEDSTHSATATEDSSQGPDSAGLADDSADALWVRAGR) the chain is on the cytoplasmic side. Residues 416–466 (KEQQQRAASPEPALQEDSTHSATATEDSSQGPDSAGLADDSADALWVRAGR) are disordered. The segment covering 435 to 447 (HSATATEDSSQGP) has biased composition (polar residues). A compositionally biased stretch (low complexity) spans 448–460 (DSAGLADDSADAL).

This sequence belongs to the potassium channel family. G (TC 1.A.1.2) subfamily. Kv6.2/KCNG2 sub-subfamily. In terms of assembly, heterodimer with KCNB1. Highly expressed in heart, liver, skeletal muscle, kidney and pancreas. Detected at low levels in brain, lung and placenta.

The protein localises to the cell membrane. Its function is as follows. Regulatory alpha-subunit of the voltage-gated potassium (Kv) channel which, when coassembled with KCNB1, can modulate the kinetics and conductance-voltage relationship. Modulates channel activity by shifting the threshold and the half-maximal activation to more negative values. Potassium channel subunit that does not form functional channels by itself. The sequence is that of Voltage-gated potassium channel regulatory subunit KCNG2 from Homo sapiens (Human).